The chain runs to 701 residues: Elongation factor G 1 (701 aa).

A tr-type G domain is found at 13 to 288 (KYTRNIGIMA…GVIDYLPSPL (276 aa)). GTP is bound by residues 22 to 29 (AHIDAGKT), 86 to 90 (DTPGH), and 140 to 143 (NKMD).

It belongs to the TRAFAC class translation factor GTPase superfamily. Classic translation factor GTPase family. EF-G/EF-2 subfamily.

The protein resides in the cytoplasm. Functionally, catalyzes the GTP-dependent ribosomal translocation step during translation elongation. During this step, the ribosome changes from the pre-translocational (PRE) to the post-translocational (POST) state as the newly formed A-site-bound peptidyl-tRNA and P-site-bound deacylated tRNA move to the P and E sites, respectively. Catalyzes the coordinated movement of the two tRNA molecules, the mRNA and conformational changes in the ribosome. The protein is Elongation factor G 1 of Bdellovibrio bacteriovorus (strain ATCC 15356 / DSM 50701 / NCIMB 9529 / HD100).